Consider the following 173-residue polypeptide: Alpha-crystallin A chain (173 aa).

N-acetylmethionine is present on Met-1. A required for complex formation with BFSP1 and BFSP2 region spans residues 1 to 63 (MDVTIQHPWF…RTVLDSGISE (63 aa)). At Gln-6 the chain carries Deamidated glutamine; partial. Ser-45 is modified (phosphoserine). Gln-50 bears the Deamidated glutamine; partial mark. The region spanning 52-162 (LFRTVLDSGI…GHSERAIPVS (111 aa)) is the sHSP domain. Lys-70 is subject to N6-acetyllysine. Deamidated glutamine; partial is present on Gln-90. At Lys-99 the chain carries N6-acetyllysine. His-100 lines the Zn(2+) pocket. Asn-101 is subject to Deamidated asparagine; partial. 2 residues coordinate Zn(2+): Glu-102 and His-107. At Ser-122 the chain carries Phosphoserine. A Deamidated asparagine; partial modification is found at Asn-123. The segment at 145-173 (KVQSGLDAGHSERAIPVSREEKPSSAPSS) is disordered. Gln-147 carries the post-translational modification Deamidated glutamine; partial. The segment covering 153–167 (GHSERAIPVSREEKP) has biased composition (basic and acidic residues). Position 154 (His-154) interacts with Zn(2+). A glycan (O-linked (GlcNAc) serine) is linked at Ser-162.

It belongs to the small heat shock protein (HSP20) family. Heteromer composed of three CRYAA and one CRYAB subunits. Inter-subunit bridging via zinc ions enhances stability, which is crucial as there is no protein turn over in the lens. Can also form homodimers and homotetramers (dimers of dimers) which serve as the building blocks of homooligomers. Within homooligomers, the zinc-binding motif is created from residues of 3 different molecules. His-100 and Glu-102 from one molecule are ligands of the zinc ion, and His-107 and His-154 residues from additional molecules complete the site with tetrahedral coordination geometry. Part of a complex required for lens intermediate filament formation composed of BFSP1, BFSP2 and CRYAA. Post-translationally, acetylation at Lys-70 may increase chaperone activity. In terms of processing, undergoes age-dependent proteolytical cleavage at the C-terminus.

The protein localises to the cytoplasm. It is found in the nucleus. Contributes to the transparency and refractive index of the lens. Acts as a chaperone, preventing aggregation of various proteins under a wide range of stress conditions. Required for the correct formation of lens intermediate filaments as part of a complex composed of BFSP1, BFSP2 and CRYAA. This is Alpha-crystallin A chain (CRYAA) from Cavia porcellus (Guinea pig).